The chain runs to 481 residues: Ankyrin repeat, SAM and basic leucine zipper domain-containing protein 1 (481 aa).

Over residues 1-16 the composition is skewed to gly residues; sequence MASGGLRGLAVAGGGE. A disordered region spans residues 1–23; it reads MASGGLRGLAVAGGGESSDSEDD. 3 positions are modified to phosphoserine: serine 17, serine 18, and serine 20. 6 ANK repeats span residues 45 to 74, 78 to 107, 110 to 144, 148 to 177, 181 to 210, and 214 to 243; these read EKNETFKKALTTGDISLVQELLDSGISVDS, YGWTPLMYAASIANVELVRVLLDRGANASF, DKQTILITACSARGSEEQILKCVELLLSRNADPNV, RLMTPIMYAARDGHPQVVAVLVAHGAEVNT, NGYTALTWAARQGHKNVVLKLLELGANKML, and DGKIPSEIAKRNKHLEIFNFLSLTLNPLEG. The SAM domain occupies 272-334; that stretch reads SYTAFGDLEI…KILSALKELE (63 aa).

In terms of assembly, interacts with DDX4, PIWIL1, RANBP9 and TDRD1.

The protein localises to the cytoplasm. Functionally, plays a central role during spermatogenesis by repressing transposable elements and preventing their mobilization, which is essential for the germline integrity. Acts via the piRNA metabolic process, which mediates the repression of transposable elements during meiosis by forming complexes composed of piRNAs and Piwi proteins and governs the methylation and subsequent repression of transposons. Its association with pi-bodies suggests a participation in the primary piRNAs metabolic process. Required prior to the pachytene stage to facilitate the production of multiple types of piRNAs, including those associated with repeats involved in the regulation of retrotransposons. May act by mediating protein-protein interactions during germ cell maturation. This is Ankyrin repeat, SAM and basic leucine zipper domain-containing protein 1 (ASZ1) from Microcebus murinus (Gray mouse lemur).